We begin with the raw amino-acid sequence, 464 residues long: ATP synthase subunit beta (464 aa).

Position 153 to 160 (153 to 160 (GGAGVGKT)) interacts with ATP.

Belongs to the ATPase alpha/beta chains family. F-type ATPases have 2 components, CF(1) - the catalytic core - and CF(0) - the membrane proton channel. CF(1) has five subunits: alpha(3), beta(3), gamma(1), delta(1), epsilon(1). CF(0) has three main subunits: a(1), b(2) and c(9-12). The alpha and beta chains form an alternating ring which encloses part of the gamma chain. CF(1) is attached to CF(0) by a central stalk formed by the gamma and epsilon chains, while a peripheral stalk is formed by the delta and b chains.

The protein localises to the cell membrane. It carries out the reaction ATP + H2O + 4 H(+)(in) = ADP + phosphate + 5 H(+)(out). Functionally, produces ATP from ADP in the presence of a proton gradient across the membrane. The catalytic sites are hosted primarily by the beta subunits. This chain is ATP synthase subunit beta, found in Acetivibrio thermocellus (strain ATCC 27405 / DSM 1237 / JCM 9322 / NBRC 103400 / NCIMB 10682 / NRRL B-4536 / VPI 7372) (Clostridium thermocellum).